Consider the following 185-residue polypeptide: Large ribosomal subunit protein uL5 (185 aa).

Belongs to the universal ribosomal protein uL5 family. Part of the 50S ribosomal subunit; part of the 5S rRNA/L5/L18/L25 subcomplex. Contacts the 5S rRNA and the P site tRNA. Forms a bridge to the 30S subunit in the 70S ribosome.

Its function is as follows. This is one of the proteins that bind and probably mediate the attachment of the 5S RNA into the large ribosomal subunit, where it forms part of the central protuberance. In the 70S ribosome it contacts protein S13 of the 30S subunit (bridge B1b), connecting the 2 subunits; this bridge is implicated in subunit movement. Contacts the P site tRNA; the 5S rRNA and some of its associated proteins might help stabilize positioning of ribosome-bound tRNAs. The protein is Large ribosomal subunit protein uL5 of Bacteroides thetaiotaomicron (strain ATCC 29148 / DSM 2079 / JCM 5827 / CCUG 10774 / NCTC 10582 / VPI-5482 / E50).